The primary structure comprises 309 residues: Porphobilinogen deaminase (309 aa).

Cysteine 242 carries the S-(dipyrrolylmethanemethyl)cysteine modification.

It belongs to the HMBS family. Monomer. Dipyrromethane serves as cofactor.

The catalysed reaction is 4 porphobilinogen + H2O = hydroxymethylbilane + 4 NH4(+). It functions in the pathway porphyrin-containing compound metabolism; protoporphyrin-IX biosynthesis; coproporphyrinogen-III from 5-aminolevulinate: step 2/4. Functionally, tetrapolymerization of the monopyrrole PBG into the hydroxymethylbilane pre-uroporphyrinogen in several discrete steps. This chain is Porphobilinogen deaminase, found in Legionella pneumophila subsp. pneumophila (strain Philadelphia 1 / ATCC 33152 / DSM 7513).